A 370-amino-acid polypeptide reads, in one-letter code: Putative methylthioribose-1-phosphate isomerase (370 aa).

Substrate-binding positions include 66-68, R109, and Q217; that span reads RGA. D258 acts as the Proton donor in catalysis. Residue 268–269 participates in substrate binding; that stretch reads NK.

The protein belongs to the eIF-2B alpha/beta/delta subunits family. MtnA subfamily.

It carries out the reaction 5-(methylsulfanyl)-alpha-D-ribose 1-phosphate = 5-(methylsulfanyl)-D-ribulose 1-phosphate. Catalyzes the interconversion of methylthioribose-1-phosphate (MTR-1-P) into methylthioribulose-1-phosphate (MTRu-1-P). This is Putative methylthioribose-1-phosphate isomerase from Aeropyrum pernix (strain ATCC 700893 / DSM 11879 / JCM 9820 / NBRC 100138 / K1).